Reading from the N-terminus, the 318-residue chain is MTDKVQTTLLFLAVGEFSVGILGNAFIGLVNCMDWIKKRKIASIDLILTSLAISRICLLCVILLDCFILVLYPDVYATGKEMRIIDFFWILTNHLSIWFATCLSIYYFFKIANFFHPLFLWMKWRIDRVISWILLGCMVLSVFISLPATENLNADFRFCVKAKRKTNLTWSCRVNKTQHASIKLLLNLATLLPFCVCLMSFFLLILSLRRHIRRMQLSATGCRDPSTEAHVRALKAVISFLLLFIAYYLSFLIATSSYFMPETELAVIFGESIALIYPSSHSFILILGNNKLRHASLKVIWKVMSILKGRKFQQHKQI.

Over 1-9 the chain is Extracellular; sequence MTDKVQTTL. A helical membrane pass occupies residues 10–30; sequence LFLAVGEFSVGILGNAFIGLV. Residues 31 to 55 are Cytoplasmic-facing; that stretch reads NCMDWIKKRKIASIDLILTSLAISR. Residues 56 to 76 form a helical membrane-spanning segment; it reads ICLLCVILLDCFILVLYPDVY. The Extracellular portion of the chain corresponds to 77–94; sequence ATGKEMRIIDFFWILTNH. A helical membrane pass occupies residues 95-115; sequence LSIWFATCLSIYYFFKIANFF. Residues 116 to 128 are Cytoplasmic-facing; it reads HPLFLWMKWRIDR. The chain crosses the membrane as a helical span at residues 129–149; that stretch reads VISWILLGCMVLSVFISLPAT. Residues 150 to 187 lie on the Extracellular side of the membrane; it reads ENLNADFRFCVKAKRKTNLTWSCRVNKTQHASIKLLLN. Residues asparagine 167 and asparagine 175 are each glycosylated (N-linked (GlcNAc...) asparagine). Residues 188 to 208 form a helical membrane-spanning segment; it reads LATLLPFCVCLMSFFLLILSL. The Cytoplasmic portion of the chain corresponds to 209–235; that stretch reads RRHIRRMQLSATGCRDPSTEAHVRALK. A helical transmembrane segment spans residues 236-256; the sequence is AVISFLLLFIAYYLSFLIATS. Residues 257 to 266 lie on the Extracellular side of the membrane; the sequence is SYFMPETELA. A helical transmembrane segment spans residues 267 to 287; that stretch reads VIFGESIALIYPSSHSFILIL. Over 288 to 318 the chain is Cytoplasmic; the sequence is GNNKLRHASLKVIWKVMSILKGRKFQQHKQI.

It belongs to the G-protein coupled receptor T2R family.

The protein localises to the membrane. Its function is as follows. Gustducin-coupled receptor implicated in the perception of bitter compounds in the oral cavity and the gastrointestinal tract. Signals through PLCB2 and the calcium-regulated cation channel TRPM5. This chain is Taste receptor type 2 member 7 (TAS2R7), found in Pongo pygmaeus (Bornean orangutan).